A 106-amino-acid chain; its full sequence is Ig kappa chain C region, B allele (106 aa).

One can recognise an Ig-like domain in the interval 5 to 102; that stretch reads PTVSIFPPST…SSSPVVKSFN (98 aa). A disulfide bridge connects residues C26 and C86.

This chain is Ig kappa chain C region, B allele, found in Rattus norvegicus (Rat).